The chain runs to 472 residues: Ribosomal protein uS12 methylthiotransferase RimO (472 aa).

Positions 22 to 133 (PSVAFAHLGC…IVDVLKRVEA (112 aa)) constitute an MTTase N-terminal domain. [4Fe-4S] cluster-binding residues include cysteine 31, cysteine 67, cysteine 96, cysteine 171, cysteine 175, and cysteine 178. The Radical SAM core domain maps to 157–386 (TTDQAVAYLK…MALQQPISAE (230 aa)). A TRAM domain is found at 389 to 460 (QRWVGRTIDV…VYDLTGQLVD (72 aa)).

The protein belongs to the methylthiotransferase family. RimO subfamily. It depends on [4Fe-4S] cluster as a cofactor.

Its subcellular location is the cytoplasm. It catalyses the reaction L-aspartate(89)-[ribosomal protein uS12]-hydrogen + (sulfur carrier)-SH + AH2 + 2 S-adenosyl-L-methionine = 3-methylsulfanyl-L-aspartate(89)-[ribosomal protein uS12]-hydrogen + (sulfur carrier)-H + 5'-deoxyadenosine + L-methionine + A + S-adenosyl-L-homocysteine + 2 H(+). Its function is as follows. Catalyzes the methylthiolation of an aspartic acid residue of ribosomal protein uS12. This is Ribosomal protein uS12 methylthiotransferase RimO from Prochlorococcus marinus (strain MIT 9303).